A 61-amino-acid polypeptide reads, in one-letter code: Small ribosomal subunit protein uS14 (61 aa).

Residues C24, C27, C40, and C43 each coordinate Zn(2+).

Belongs to the universal ribosomal protein uS14 family. Zinc-binding uS14 subfamily. As to quaternary structure, part of the 30S ribosomal subunit. Contacts proteins S3 and S10. Requires Zn(2+) as cofactor.

In terms of biological role, binds 16S rRNA, required for the assembly of 30S particles and may also be responsible for determining the conformation of the 16S rRNA at the A site. In Helicobacter pylori (strain J99 / ATCC 700824) (Campylobacter pylori J99), this protein is Small ribosomal subunit protein uS14.